The chain runs to 179 residues: Large ribosomal subunit protein uL5 (179 aa).

The protein belongs to the universal ribosomal protein uL5 family. As to quaternary structure, part of the 50S ribosomal subunit; part of the 5S rRNA/L5/L18/L25 subcomplex. Contacts the 5S rRNA and the P site tRNA. Forms a bridge to the 30S subunit in the 70S ribosome.

In terms of biological role, this is one of the proteins that bind and probably mediate the attachment of the 5S RNA into the large ribosomal subunit, where it forms part of the central protuberance. In the 70S ribosome it contacts protein S13 of the 30S subunit (bridge B1b), connecting the 2 subunits; this bridge is implicated in subunit movement. Contacts the P site tRNA; the 5S rRNA and some of its associated proteins might help stabilize positioning of ribosome-bound tRNAs. The sequence is that of Large ribosomal subunit protein uL5 from Vibrio parahaemolyticus serotype O3:K6 (strain RIMD 2210633).